The sequence spans 833 residues: Vacuolar protein sorting-associated protein 16 homolog (833 aa).

It belongs to the VPS16 family. In terms of assembly, component of the homotypic fusion and vacuole protein sorting (HOPS) complex, composed of Vps16A, car/Vps33A, dor/Vps18, Vps39, Vps11 and lt/Vps41. Interacts with Syx17 (via SNARE domain); the interaction may involve multiple components of the HOPS complex and may promote assembly of the Syx17-Snap29-Vamp7 trans-SNARE complex. Component of the class C core vacuole/endosome tethering (CORVET) complex composed of at least Vps8, dor/Vps18, car/Vps33A and Vps16A; unlike in other species, Vps11 is not part of the Drosophila complex. Due to the reduced number of components the Drosophila CORVET complex is often referred to as the miniCORVET complex. The tethering complex core made up of Vps16A, car/Vps33A and dor/Vps18 and shared by both HOPS and CORVET, preferentially associates with CORVET-specific Vps8 over HOPS-specific lt/Vps41. Interacts with Rab2 (GTP-bound form).

The protein resides in the late endosome membrane. The protein localises to the lysosome membrane. It localises to the cytoplasmic vesicle. Its subcellular location is the autophagosome. Functionally, core component of the class C core vacuole/endosome tethering (CORVET) and the homotypic fusion and vacuole protein sorting (HOPS) tethering complexes involved in endo-lysosomal vesicle trafficking and lysosome biogenesis. The CORVET complex facilitates docking and fusion of endosomal vesicles during endosome maturation, acts upstream of HOPS, but is not involved in autophagic flux. The CORVET complex may cooperate with the early endosomal tether Rbsn-5 to mediate endosomal fusion. The HOPS complex facilitates docking and fusion of lysosomes with late endosomes and several other types of vesicles. The HOPS complex is also involved in autophagy and crinophagy (the elimination of unused secretory granules through their fusion with lysosomes). The HOPS complex mediates autophagocitic flux, probably by binding autophagosome-associated Syx17/syntaxin 17, promoting assembly of the trans-SNARE complex and instigating autophagosome-lysosome fusion. Independent of Syx17/syntaxin 17, HOPS is involved in biosynthetic transport to lysosomes and lysosome-related organelles such as eye-pigment granules. Required for endocytic degradation of boss/bride of sevenless and N/Notch in developing ommatidia. The sequence is that of Vacuolar protein sorting-associated protein 16 homolog from Drosophila melanogaster (Fruit fly).